The chain runs to 132 residues: MVEFKIILSDTRTGHSYKMDVSGGAAGALIGKRVGTEIDAAPLGLNGYKILITGASDRNGTPSRRDLPGSGRRGLLLAGGVGFNPKEDGQRARKSIRGNEITADFVQINAKVATYGEKSLDELLAAPAAAAE.

Belongs to the eukaryotic ribosomal protein eS6 family.

In Methanosphaerula palustris (strain ATCC BAA-1556 / DSM 19958 / E1-9c), this protein is Small ribosomal subunit protein eS6.